Reading from the N-terminus, the 732-residue chain is Formin-homology and zinc finger domains protein 1 (732 aa).

Composition is skewed to low complexity over residues 1-12 (MMLASSAPTAPS), 19-45 (QPSA…SDAS), 121-137 (QQQQ…QSSS), and 240-251 (SSPKSPTSPTQP). The N-terminal stretch at 1–27 (MMLASSAPTAPSLLPPSSQPSAATTRA) is a signal peptide. Disordered stretches follow at residues 1-45 (MMLA…SDAS), 121-141 (QQQQ…SDRK), and 232-267 (RGRP…RRNT). The span at 256–267 (SQASSLPSRRNT) shows a compositional bias: polar residues. The 378-residue stretch at 355–732 (PISLSSSIIP…DDHHINVSSP (378 aa)) folds into the FH2 domain.

This sequence belongs to the formin homology family. As to expression, transiently expressed in all mesoderm derived progenitor body wall muscle cells before they differentiate.

In terms of biological role, acts redundantly with hlh-1 to promote body wall muscle cell and coelomocyte specification in postembryonic mesoderm progenitors, probably through suppression of sem-2. This chain is Formin-homology and zinc finger domains protein 1, found in Caenorhabditis elegans.